The following is a 187-amino-acid chain: MSKTNSETGNNFEQQKQELIAALKACGAVRYGDFTLASGKKSKYYIDIKKASTDPKTLKIIARQAALRIKEMDVDTVAGVELGGVPLATAVSLETELPLLIVRKSVKDYGTKSRFVGDLKPEDRLVMLEDVTTSGGSVRDAIEVVREAGASLKYVITVVDREEGAGEKLKEADVELVPLVSASDLLK.

Residues Arg103, Lys104, Lys107, and 129-137 each bind 5-phospho-alpha-D-ribose 1-diphosphate; that span reads EDVTTSGGS. Residues Thr133 and Arg161 each contribute to the orotate site.

The protein belongs to the purine/pyrimidine phosphoribosyltransferase family. PyrE subfamily. In terms of assembly, homodimer. It depends on Mg(2+) as a cofactor.

It catalyses the reaction orotidine 5'-phosphate + diphosphate = orotate + 5-phospho-alpha-D-ribose 1-diphosphate. It functions in the pathway pyrimidine metabolism; UMP biosynthesis via de novo pathway; UMP from orotate: step 1/2. Functionally, catalyzes the transfer of a ribosyl phosphate group from 5-phosphoribose 1-diphosphate to orotate, leading to the formation of orotidine monophosphate (OMP). The protein is Orotate phosphoribosyltransferase of Methanosarcina mazei (strain ATCC BAA-159 / DSM 3647 / Goe1 / Go1 / JCM 11833 / OCM 88) (Methanosarcina frisia).